The following is a 1123-amino-acid chain: MPRSLGNCQLNYSKERMWEPGYLKAKCAELRLESEFRLYRIRLWKSYLLTFFMLHIFVTSVHCALLLATIERRSIIYFDVALSIGCALVLILVLSVNFCDEFIAKHTWYMYASSIFASLTLVFADLTESIYHTYAHSWILGTFYDTYIIYMIYMFLPIHFISGAVLLALLVSGLYILYFVIFIAQGFAQFASALFSVGGMSVDIVHYLCLNLVGIFYRVMNDTVVRSSFLDRHQYIKEKIWLRNARLQEKQLLDSILPPQISLPLQKDIQGRIVMAKQGIHSWTAMERTMAIQIHPDVSILYADVVNYTHLTTTLTVEMLVKVLHDLYGRFDLAAYRYKVQRIKFLGDCYYCVAGLSDPDPDHANNCVILGLSMINHIMEVRDIHGLDINMRIGVHSGNLFAGVIGEAKLQFDIWGLDVTIANVLESTGVPGCVHISGATLNNLDVNRFDIEDGPEEARDHPLLKKYRIRSYIIRQDLHMDDEDSDEFLGDLHSISLCNMGAQPRISDSANQSLRALFHEELREEFRKMPVSAFSPKRLLGICRFNTGKEVPAHQNLNICLTFTDPILERAYLKQTDYMYKYSIILSASVGCSLVYIELMDTQMICSSCFVLPASVATIQCILALIAWYKKYCWTRYGRNNVPHHYNGFSCFIFRIHDKILNSLPIRICIYLFLMISSFFVMCLIVMSCQREEFEMAYIEERLFHYEQEAHICFHPWVTTNMLSLMICLTFTFAHIPIMVKTAVAILETLAYLLLIFFQFDFVFHHSVTTNPYFKSEYAHALLICITFLIMFVKERQIEFTNKVNFNWRVDLRKEENAASLTNHSIIIILNNILPSHIVDVYLNSLAKHELYFENYRMVSVMFAMLINFEMDLRSLRVLNEIIAEFDTLLLFYKEYYTVEKIKIVGCTYMAACGLDLNFAGSTSTNRKESIPPTEFNEEQSRRILFQQSNEDLDEVVFVMTSYALDMMRTLAKSNEAYQSIAGDRNITDGTIAIGISSGEVMAGIVGASQPHYDIWGNPVNMASRMESTGLPGHIHVTEETSEILQQFGITCSYRGMTFVKGRGKIPTYLVGIDENLNFIPQKATRFPSHQERSTVISLQSTYTHAENNNSIASTSRHTLQSL.

Topologically, residues 1–47 (MPRSLGNCQLNYSKERMWEPGYLKAKCAELRLESEFRLYRIRLWKSY) are cytoplasmic. A helical membrane pass occupies residues 48–68 (LLTFFMLHIFVTSVHCALLLA). Over 69-73 (TIERR) the chain is Extracellular. Residues 74–94 (SIIYFDVALSIGCALVLILVL) form a helical membrane-spanning segment. The Cytoplasmic segment spans residues 95–106 (SVNFCDEFIAKH). Residues 107 to 127 (TWYMYASSIFASLTLVFADLT) traverse the membrane as a helical segment. Topologically, residues 128 to 137 (ESIYHTYAHS) are extracellular. Residues 138–158 (WILGTFYDTYIIYMIYMFLPI) form a helical membrane-spanning segment. The Cytoplasmic segment spans residues 159 to 163 (HFISG). The helical transmembrane segment at 164 to 184 (AVLLALLVSGLYILYFVIFIA) threads the bilayer. Over 185–196 (QGFAQFASALFS) the chain is Extracellular. A helical transmembrane segment spans residues 197–217 (VGGMSVDIVHYLCLNLVGIFY). At 218-581 (RVMNDTVVRS…YLKQTDYMYK (364 aa)) the chain is on the cytoplasmic side. ATP contacts are provided by residues 346–348 (LGD) and arginine 392. Aspartate 348 contacts Mg(2+). A helical membrane pass occupies residues 582 to 602 (YSIILSASVGCSLVYIELMDT). The Extracellular segment spans residues 603–608 (QMICSS). Residues 609–629 (CFVLPASVATIQCILALIAWY) traverse the membrane as a helical segment. Residues 630–667 (KKYCWTRYGRNNVPHHYNGFSCFIFRIHDKILNSLPIR) lie on the Cytoplasmic side of the membrane. A helical transmembrane segment spans residues 668–688 (ICIYLFLMISSFFVMCLIVMS). At 689–719 (CQREEFEMAYIEERLFHYEQEAHICFHPWVT) the chain is on the extracellular side. Residues 720 to 740 (TNMLSLMICLTFTFAHIPIMV) traverse the membrane as a helical segment. The Cytoplasmic segment spans residues 741–743 (KTA). The helical transmembrane segment at 744–764 (VAILETLAYLLLIFFQFDFVF) threads the bilayer. Residues 765–772 (HHSVTTNP) are Extracellular-facing. A helical membrane pass occupies residues 773 to 793 (YFKSEYAHALLICITFLIMFV). At 794 to 1123 (KERQIEFTNK…STSRHTLQSL (330 aa)) the chain is on the cytoplasmic side. ATP is bound by residues lysine 903, 1014–1016 (DIW), 1021–1025 (NMASR), and lysine 1061.

The protein belongs to the adenylyl cyclase class-4/guanylyl cyclase family. As to expression, expressed in labella.

The protein localises to the membrane. It catalyses the reaction ATP = 3',5'-cyclic AMP + diphosphate. Catalyzes the formation of the signaling molecule cAMP in response to G-protein signaling. The chain is Adenylyl cyclase X E from Drosophila melanogaster (Fruit fly).